A 198-amino-acid chain; its full sequence is Large ribosomal subunit protein uL5 (198 aa).

The protein belongs to the universal ribosomal protein uL5 family. Part of the 50S ribosomal subunit; part of the 5S rRNA/L5/L18/L25 subcomplex. Contacts the 5S rRNA and the P site tRNA. Forms a bridge to the 30S subunit in the 70S ribosome.

Its function is as follows. This is one of the proteins that bind and probably mediate the attachment of the 5S RNA into the large ribosomal subunit, where it forms part of the central protuberance. In the 70S ribosome it contacts protein S13 of the 30S subunit (bridge B1b), connecting the 2 subunits; this bridge is implicated in subunit movement. Contacts the P site tRNA; the 5S rRNA and some of its associated proteins might help stabilize positioning of ribosome-bound tRNAs. The chain is Large ribosomal subunit protein uL5 from Chlorobium phaeovibrioides (strain DSM 265 / 1930) (Prosthecochloris vibrioformis (strain DSM 265)).